A 365-amino-acid polypeptide reads, in one-letter code: Serine/threonine-protein kinase SAPK6 (365 aa).

The region spanning 4 to 260 (YELLKDIGSG…IREIRNHPWF (257 aa)) is the Protein kinase domain. Residues 10–18 (IGSGNFGVA) and Lys33 contribute to the ATP site. Asp123 functions as the Proton acceptor in the catalytic mechanism. The disordered stretch occupies residues 298–365 (VQEAKTPPPS…AHASCDLQKS (68 aa)). Over residues 317–347 (TEEEEQEDGKNPDDDEGDRDEEEGEEGDSED) the composition is skewed to acidic residues.

Belongs to the protein kinase superfamily. Ser/Thr protein kinase family. Interacts with BZIP46. Post-translationally, may be phosphorylated. As to expression, expressed in leaf blades and leaf sheaths. Expressed in shoots and roots of young seedlings.

It carries out the reaction L-seryl-[protein] + ATP = O-phospho-L-seryl-[protein] + ADP + H(+). The enzyme catalyses L-threonyl-[protein] + ATP = O-phospho-L-threonyl-[protein] + ADP + H(+). Activated by hyperosmotic stress. Functionally, may play a role in signal transduction of hyperosmotic response. Can phosphorylate ABI5 in vitro. Can phosphorylate BZIP46 in vitro. This Oryza sativa subsp. japonica (Rice) protein is Serine/threonine-protein kinase SAPK6.